The chain runs to 465 residues: Soluble pyridine nucleotide transhydrogenase (465 aa).

35–44 (ERYNNVGGGC) is an FAD binding site.

The protein belongs to the class-I pyridine nucleotide-disulfide oxidoreductase family. The cofactor is FAD.

The protein localises to the cytoplasm. The enzyme catalyses NAD(+) + NADPH = NADH + NADP(+). Functionally, conversion of NADPH, generated by peripheral catabolic pathways, to NADH, which can enter the respiratory chain for energy generation. The protein is Soluble pyridine nucleotide transhydrogenase of Photorhabdus laumondii subsp. laumondii (strain DSM 15139 / CIP 105565 / TT01) (Photorhabdus luminescens subsp. laumondii).